The sequence spans 222 residues: Octanoyltransferase (222 aa).

In terms of domain architecture, BPL/LPL catalytic spans 35 to 210; sequence ETTPDELWLV…EFVHLLGYPK (176 aa). Residues 74–81, 141–143, and 154–156 each bind substrate; these read RGGQVTYH, SLG, and GLA. Cys172 (acyl-thioester intermediate) is an active-site residue.

It belongs to the LipB family.

It is found in the cytoplasm. The enzyme catalyses octanoyl-[ACP] + L-lysyl-[protein] = N(6)-octanoyl-L-lysyl-[protein] + holo-[ACP] + H(+). Its pathway is protein modification; protein lipoylation via endogenous pathway; protein N(6)-(lipoyl)lysine from octanoyl-[acyl-carrier-protein]: step 1/2. Its function is as follows. Catalyzes the transfer of endogenously produced octanoic acid from octanoyl-acyl-carrier-protein onto the lipoyl domains of lipoate-dependent enzymes. Lipoyl-ACP can also act as a substrate although octanoyl-ACP is likely to be the physiological substrate. The protein is Octanoyltransferase of Serratia proteamaculans (strain 568).